Consider the following 156-residue polypeptide: Large ribosomal subunit protein eL29 (156 aa).

Positions 1-26 are enriched in basic residues; sequence MAKSKNHTTHNQSRKWHRNGIKKPRS. Disordered stretches follow at residues 1–35 and 116–156; these read MAKSKNHTTHNQSRKWHRNGIKKPRSQRYESLKGV and RRLC…VKAP. Lys5 bears the N6-methyllysine mark. Ser31 carries the phosphoserine modification. An N6-acetyllysine modification is found at Lys33. Repeat copies occupy residues 129 to 136 and 137 to 144. The tract at residues 129-144 is 2 X 8 AA tandem repeats of A-X-A-K-A-P-A-[KQ]; sequence AEAKAPAKAQAKAPAQ. Positions 134–156 are enriched in low complexity; the sequence is PAKAQAKAPAQAPKGAQAPVKAP.

This sequence belongs to the eukaryotic ribosomal protein eL29 family. In terms of assembly, component of the large ribosomal subunit.

It localises to the cytoplasm. Its function is as follows. Component of the large ribosomal subunit. The ribosome is a large ribonucleoprotein complex responsible for the synthesis of proteins in the cell. The sequence is that of Large ribosomal subunit protein eL29 (Rpl29) from Rattus norvegicus (Rat).